A 212-amino-acid chain; its full sequence is Translation initiation factor IF-3 (212 aa).

A disordered region spans residues 168-212 (MAPKAPASPKKDKADRPEGDAGDTDMAAPAPAPAAAPETESAPSA). Over residues 176 to 186 (PKKDKADRPEG) the composition is skewed to basic and acidic residues. The span at 194–212 (AAPAPAPAAAPETESAPSA) shows a compositional bias: low complexity.

This sequence belongs to the IF-3 family. Monomer.

The protein resides in the cytoplasm. Functionally, IF-3 binds to the 30S ribosomal subunit and shifts the equilibrium between 70S ribosomes and their 50S and 30S subunits in favor of the free subunits, thus enhancing the availability of 30S subunits on which protein synthesis initiation begins. The chain is Translation initiation factor IF-3 from Deinococcus radiodurans (strain ATCC 13939 / DSM 20539 / JCM 16871 / CCUG 27074 / LMG 4051 / NBRC 15346 / NCIMB 9279 / VKM B-1422 / R1).